The following is a 473-amino-acid chain: Photosystem II CP43 reaction center protein (473 aa).

The propeptide occupies 1–14; the sequence is MKILYSQRRFYPVE. T15 bears the N-acetylthreonine mark. T15 is modified (phosphothreonine). A run of 5 helical transmembrane segments spans residues 69–93, 134–155, 178–200, 255–275, and 291–312; these read LFEV…PHLA, LIGP…KDKN, KALY…RKIT, KPFA…LSYS, and WFNN…ASQA. E367 provides a ligand contact to [CaMn4O5] cluster. Residues 447-471 form a helical membrane-spanning segment; it reads RARAAAAGFEKGIDRDFEPVLSMTP.

It belongs to the PsbB/PsbC family. PsbC subfamily. PSII is composed of 1 copy each of membrane proteins PsbA, PsbB, PsbC, PsbD, PsbE, PsbF, PsbH, PsbI, PsbJ, PsbK, PsbL, PsbM, PsbT, PsbX, PsbY, PsbZ, Psb30/Ycf12, at least 3 peripheral proteins of the oxygen-evolving complex and a large number of cofactors. It forms dimeric complexes. The cofactor is Binds multiple chlorophylls and provides some of the ligands for the Ca-4Mn-5O cluster of the oxygen-evolving complex. It may also provide a ligand for a Cl- that is required for oxygen evolution. PSII binds additional chlorophylls, carotenoids and specific lipids.. Phosphorylated on threonine residue(s).

Its subcellular location is the plastid. The protein localises to the chloroplast thylakoid membrane. One of the components of the core complex of photosystem II (PSII). It binds chlorophyll and helps catalyze the primary light-induced photochemical processes of PSII. PSII is a light-driven water:plastoquinone oxidoreductase, using light energy to abstract electrons from H(2)O, generating O(2) and a proton gradient subsequently used for ATP formation. The protein is Photosystem II CP43 reaction center protein of Marchantia polymorpha (Common liverwort).